A 410-amino-acid polypeptide reads, in one-letter code: 2-oxoglutarate-dependent dioxygenase AOP3 (410 aa).

Positions 258 to 355 (GNASVGAKEA…RYAAALFSNP (98 aa)) constitute a Fe2OG dioxygenase domain. Residues histidine 278, aspartate 280, and histidine 335 each coordinate Fe cation. Arginine 346 lines the 2-oxoglutarate pocket.

It belongs to the iron/ascorbate-dependent oxidoreductase family. It depends on Fe(2+) as a cofactor.

2-oxoglutarate-dependent dioxygenase involved in glucosinolates biosynthesis. Catalyzes the conversion of methylsulfinylalkyl glucosinolates to hydroxyalkyl glucosinolates. This chain is 2-oxoglutarate-dependent dioxygenase AOP3 (AOP3), found in Arabidopsis thaliana (Mouse-ear cress).